Consider the following 445-residue polypeptide: tRNA(Ile)-lysidine synthase (445 aa).

Residue 19 to 24 (SGGIDS) coordinates ATP.

The protein belongs to the tRNA(Ile)-lysidine synthase family.

The protein resides in the cytoplasm. The enzyme catalyses cytidine(34) in tRNA(Ile2) + L-lysine + ATP = lysidine(34) in tRNA(Ile2) + AMP + diphosphate + H(+). Its function is as follows. Ligates lysine onto the cytidine present at position 34 of the AUA codon-specific tRNA(Ile) that contains the anticodon CAU, in an ATP-dependent manner. Cytidine is converted to lysidine, thus changing the amino acid specificity of the tRNA from methionine to isoleucine. This is tRNA(Ile)-lysidine synthase from Buchnera aphidicola subsp. Schizaphis graminum (strain Sg).